A 154-amino-acid polypeptide reads, in one-letter code: Superoxide dismutase [Cu-Zn] (154 aa).

Residues H47, H49, and H64 each coordinate Cu cation. Cysteines 58 and 147 form a disulfide. Positions 62–89 (GPHFNPFKKNHGGPTDSERHVGDLGNVK) are disordered. Residues H64, H72, H81, and D84 each coordinate Zn(2+). Residue H121 participates in Cu cation binding. R144 is a substrate binding site.

This sequence belongs to the Cu-Zn superoxide dismutase family. Homodimer. It depends on Cu cation as a cofactor. Zn(2+) serves as cofactor.

The protein localises to the cytoplasm. The catalysed reaction is 2 superoxide + 2 H(+) = H2O2 + O2. In terms of biological role, destroys radicals which are normally produced within the cells and which are toxic to biological systems. The sequence is that of Superoxide dismutase [Cu-Zn] (SOD1) from Yarrowia lipolytica (strain CLIB 122 / E 150) (Yeast).